A 572-amino-acid polypeptide reads, in one-letter code: Arginine--tRNA ligase (572 aa).

The short motif at 121-131 is the 'HIGH' region element; sequence PNLAKEMHVGH.

This sequence belongs to the class-I aminoacyl-tRNA synthetase family. Monomer.

The protein localises to the cytoplasm. It catalyses the reaction tRNA(Arg) + L-arginine + ATP = L-arginyl-tRNA(Arg) + AMP + diphosphate. The chain is Arginine--tRNA ligase from Chromobacterium violaceum (strain ATCC 12472 / DSM 30191 / JCM 1249 / CCUG 213 / NBRC 12614 / NCIMB 9131 / NCTC 9757 / MK).